The following is a 452-amino-acid chain: Probable splicing factor, arginine/serine-rich 7 (452 aa).

2 RRM domains span residues 10-91 (KILH…YPNP) and 163-240 (RTVY…HSRV). Positions 258–452 (EEAIRMGRNG…GNGDVVMASE (195 aa)) are disordered. Residues 259–272 (EAIRMGRNGDDRDR) are compositionally biased toward basic and acidic residues. The span at 273–290 (RRSRSPRRRRSPSPRRRR) shows a compositional bias: basic residues. Positions 291 to 305 (DSRDRDRDRDRDRRR) are enriched in basic and acidic residues. Basic residues-rich tracts occupy residues 323–335 (KRSR…RRSR), 345–360 (KRSR…KSRD), and 370–382 (SKDR…RSRS). The span at 383 to 421 (RSPEKRRDKEDRKTEKKENENESSLREKLLEKKAARKDS) shows a compositional bias: basic and acidic residues.

Belongs to the splicing factor SR family. In terms of processing, extensively phosphorylated on serine residues in the RS domain.

The protein resides in the nucleus. This Caenorhabditis elegans protein is Probable splicing factor, arginine/serine-rich 7 (rsp-7).